The primary structure comprises 429 residues: Glutamate-1-semialdehyde 2,1-aminomutase 1 (429 aa).

K268 carries the N6-(pyridoxal phosphate)lysine modification.

Belongs to the class-III pyridoxal-phosphate-dependent aminotransferase family. HemL subfamily. Homodimer. Requires pyridoxal 5'-phosphate as cofactor.

It is found in the cytoplasm. It carries out the reaction (S)-4-amino-5-oxopentanoate = 5-aminolevulinate. Its pathway is porphyrin-containing compound metabolism; protoporphyrin-IX biosynthesis; 5-aminolevulinate from L-glutamyl-tRNA(Glu): step 2/2. This Listeria innocua serovar 6a (strain ATCC BAA-680 / CLIP 11262) protein is Glutamate-1-semialdehyde 2,1-aminomutase 1.